A 488-amino-acid chain; its full sequence is Catalase (488 aa).

Residues Met1–Ala24 form a disordered region. Residues Leu7–Thr23 are compositionally biased toward polar residues. Catalysis depends on residues His55 and Asn128. Tyr338 is a heme binding site.

It belongs to the catalase family. Heme serves as cofactor.

It is found in the cytoplasm. It carries out the reaction 2 H2O2 = O2 + 2 H2O. Its function is as follows. Decomposes hydrogen peroxide into water and oxygen; serves to protect cells from the toxic effects of hydrogen peroxide. This chain is Catalase (kat), found in Listeria innocua serovar 6a (strain ATCC BAA-680 / CLIP 11262).